We begin with the raw amino-acid sequence, 471 residues long: Siroheme synthase 1 (471 aa).

A precorrin-2 dehydrogenase /sirohydrochlorin ferrochelatase region spans residues 1–203 (MEYLPLFAQL…GDTRAAEAVL (203 aa)). NAD(+)-binding positions include 22-23 (EV) and 43-44 (KK). At serine 128 the chain carries Phosphoserine. The segment at 215 to 471 (GEIILVGAGP…NLRSSVVNLA (257 aa)) is uroporphyrinogen-III C-methyltransferase. Proline 224 contacts S-adenosyl-L-methionine. Residue aspartate 247 is the Proton acceptor of the active site. Catalysis depends on lysine 269, which acts as the Proton donor. S-adenosyl-L-methionine contacts are provided by residues 300-302 (GGD), isoleucine 305, 330-331 (TA), methionine 382, and glycine 411.

In the N-terminal section; belongs to the precorrin-2 dehydrogenase / sirohydrochlorin ferrochelatase family. It in the C-terminal section; belongs to the precorrin methyltransferase family.

It catalyses the reaction uroporphyrinogen III + 2 S-adenosyl-L-methionine = precorrin-2 + 2 S-adenosyl-L-homocysteine + H(+). The catalysed reaction is precorrin-2 + NAD(+) = sirohydrochlorin + NADH + 2 H(+). The enzyme catalyses siroheme + 2 H(+) = sirohydrochlorin + Fe(2+). It functions in the pathway cofactor biosynthesis; adenosylcobalamin biosynthesis; precorrin-2 from uroporphyrinogen III: step 1/1. The protein operates within cofactor biosynthesis; adenosylcobalamin biosynthesis; sirohydrochlorin from precorrin-2: step 1/1. It participates in porphyrin-containing compound metabolism; siroheme biosynthesis; precorrin-2 from uroporphyrinogen III: step 1/1. Its pathway is porphyrin-containing compound metabolism; siroheme biosynthesis; siroheme from sirohydrochlorin: step 1/1. It functions in the pathway porphyrin-containing compound metabolism; siroheme biosynthesis; sirohydrochlorin from precorrin-2: step 1/1. Multifunctional enzyme that catalyzes the SAM-dependent methylations of uroporphyrinogen III at position C-2 and C-7 to form precorrin-2 via precorrin-1. Then it catalyzes the NAD-dependent ring dehydrogenation of precorrin-2 to yield sirohydrochlorin. Finally, it catalyzes the ferrochelation of sirohydrochlorin to yield siroheme. This chain is Siroheme synthase 1, found in Cronobacter sakazakii (strain ATCC BAA-894) (Enterobacter sakazakii).